The chain runs to 343 residues: 3-isopropylmalate dehydrogenase (343 aa).

Arg94, Arg104, Arg128, and Asp218 together coordinate substrate. Positions 218, 242, and 246 each coordinate Mg(2+). 278-290 (GSAPDIAGQNKAN) serves as a coordination point for NAD(+).

It belongs to the isocitrate and isopropylmalate dehydrogenases family. LeuB type 2 subfamily. As to quaternary structure, homodimer. The cofactor is Mg(2+). It depends on Mn(2+) as a cofactor.

It localises to the cytoplasm. The enzyme catalyses (2R,3S)-3-isopropylmalate + NAD(+) = 4-methyl-2-oxopentanoate + CO2 + NADH. Its pathway is amino-acid biosynthesis; L-leucine biosynthesis; L-leucine from 3-methyl-2-oxobutanoate: step 3/4. Catalyzes the oxidation of 3-carboxy-2-hydroxy-4-methylpentanoate (3-isopropylmalate) to 3-carboxy-4-methyl-2-oxopentanoate. The product decarboxylates to 4-methyl-2 oxopentanoate. The chain is 3-isopropylmalate dehydrogenase from Bifidobacterium longum subsp. infantis (strain ATCC 15697 / DSM 20088 / JCM 1222 / NCTC 11817 / S12).